Consider the following 24-residue polypeptide: Brevinin-1Ecb (24 aa).

Cysteine 18 and cysteine 24 are joined by a disulfide.

Expressed by the skin glands.

The protein resides in the secreted. Shows antibacterial activity against representative Gram-negative and Gram-positive bacterial species, and hemolytic activity. The sequence is that of Brevinin-1Ecb from Pelophylax ridibundus (Marsh frog).